The following is a 275-amino-acid chain: Ribosomal RNA small subunit methyltransferase A (275 aa).

Residues asparagine 15, leucine 17, glycine 42, glutamate 63, aspartate 88, and asparagine 111 each contribute to the S-adenosyl-L-methionine site.

The protein belongs to the class I-like SAM-binding methyltransferase superfamily. rRNA adenine N(6)-methyltransferase family. RsmA subfamily.

It localises to the cytoplasm. The enzyme catalyses adenosine(1518)/adenosine(1519) in 16S rRNA + 4 S-adenosyl-L-methionine = N(6)-dimethyladenosine(1518)/N(6)-dimethyladenosine(1519) in 16S rRNA + 4 S-adenosyl-L-homocysteine + 4 H(+). Functionally, specifically dimethylates two adjacent adenosines (A1518 and A1519) in the loop of a conserved hairpin near the 3'-end of 16S rRNA in the 30S particle. May play a critical role in biogenesis of 30S subunits. The chain is Ribosomal RNA small subunit methyltransferase A from Geobacter metallireducens (strain ATCC 53774 / DSM 7210 / GS-15).